A 641-amino-acid polypeptide reads, in one-letter code: Epithelial sodium channel subunit beta (641 aa).

Topologically, residues methionine 1–alanine 50 are cytoplasmic. Residues methionine 51–isoleucine 71 form a helical membrane-spanning segment. The Extracellular portion of the chain corresponds to arginine 72–glycine 533. Intrachain disulfides connect cysteine 98–cysteine 273, cysteine 185–cysteine 190, cysteine 197–cysteine 204, cysteine 250–cysteine 257, cysteine 362–cysteine 449, cysteine 387–cysteine 445, cysteine 391–cysteine 441, cysteine 400–cysteine 427, and cysteine 402–cysteine 416. A glycan (N-linked (GlcNAc...) asparagine) is linked at asparagine 141. The N-linked (GlcNAc...) asparagine glycan is linked to asparagine 261. The chain crosses the membrane as a helical span at residues serine 534–isoleucine 554. Residues lysine 555–isoleucine 641 are Cytoplasmic-facing. The segment at proline 593–leucine 624 is disordered. Residues proline 617–tyrosine 621 carry the PY motif; recruits WW domain-containing proteins and is thereby required for ubiquitination and inhibition of the channel by NEDD4 and NEDD4L motif. A phosphoserine mark is found at serine 634 and serine 636.

The protein belongs to the amiloride-sensitive sodium channel (TC 1.A.6) family. SCNN1B subfamily. Component of the heterotrimeric epithelial sodium channel (ENaC) composed of an alpha/SCNN1A, a beta/SCNN1B and a gamma/SCNN1G subunit. An additional delta/SCNN1D subunit can replace the alpha/SCNN1A subunit to form an alternative channel with specific properties. Interacts with WWP1 (via WW domains). Interacts with WWP2 (via WW domains); inhibits the channel. Interacts with the full-length immature form of PCSK9 (pro-PCSK9). Interacts (N-glycosylated) with BPIFA1; the interaction is direct and inhibits the proteolytic processing of SCNN1A and SCNN1G and the activation of ENaC. In terms of processing, ubiquitinated. Can be ubiquitinated at multiple sites and undergo monoubiquitination and polyubiquitination. Ubiquitination by NEDD4 or NEDD4L inhibits the ENaC channel through endocytosis, intracellular retention and degradation of its individual subunits. However, some studies could not confirm the ubiquitination of this subunit of the ENaC. Phosphorylated on serine and threonine residues. Aldosterone and insulin increase the basal level of phosphorylation. Post-translationally, N-glycosylated. N-glycosylation is required for interaction with BPIFA1.

The protein resides in the apical cell membrane. It localises to the cytoplasmic vesicle membrane. It catalyses the reaction Na(+)(in) = Na(+)(out). Originally identified and characterized by its inhibition by the diuretic drug amiloride. This is one of the three pore-forming subunits of the heterotrimeric epithelial sodium channel (ENaC), a critical regulator of sodium balance and fluid homeostasis. ENaC operates in epithelial tissues, where it mediates the electrodiffusion of sodium ions from extracellular fluid through the apical membrane of cells, with water following osmotically. It plays a key role in maintaining sodium homeostasis through electrogenic sodium reabsorption in the kidneys. Additionally, ENaC is essential for airway surface liquid homeostasis, which is crucial for proper mucus clearance. The protein is Epithelial sodium channel subunit beta of Canis lupus familiaris (Dog).